Here is a 358-residue protein sequence, read N- to C-terminus: MKIPPISILSHTSESYANAISHELGKGFQHAKLVYQEWFRRGNISGLNPAFKNAQALLQNILSLTDFSFLPISQNLTDGQTGKFLIKTIDDLDIKSVLIPMQAGGTLCISSQIGCQMGCAFCETGRMGLLRNLTTQEILSQLFIAKFRLHFSVRNIVFMGMGEPFDNYDTVMHAFRILTDSHGFGLGNNRITISTSGCLEGIYRLLQETTPLPNLAVSLNAPNDELRNKLMPINKKYPLKELYQAIYDFCKQTSKQVLIAYVLIKEQNDSIEHAKQLTNFLSGLNVKINLIPYNPQSRDRFQSPEQSTLENFTSYLREKGFYTLLRQTKGQKIMAACGQLGNLELKRKKPFILPILKE.

Positions 101–326 (MQAGGTLCIS…REKGFYTLLR (226 aa)) constitute a Radical SAM core domain. An intrachain disulfide couples cysteine 108 to cysteine 337. Residues cysteine 115, cysteine 119, and cysteine 122 each coordinate [4Fe-4S] cluster. Residues 162–163 (GE), serine 194, 218–220 (SLN), and asparagine 294 each bind S-adenosyl-L-methionine. The S-methylcysteine intermediate role is filled by cysteine 337.

The protein belongs to the radical SAM superfamily. RlmN family. The cofactor is [4Fe-4S] cluster.

The protein localises to the cytoplasm. It catalyses the reaction adenosine(2503) in 23S rRNA + 2 reduced [2Fe-2S]-[ferredoxin] + 2 S-adenosyl-L-methionine = 2-methyladenosine(2503) in 23S rRNA + 5'-deoxyadenosine + L-methionine + 2 oxidized [2Fe-2S]-[ferredoxin] + S-adenosyl-L-homocysteine. It carries out the reaction adenosine(37) in tRNA + 2 reduced [2Fe-2S]-[ferredoxin] + 2 S-adenosyl-L-methionine = 2-methyladenosine(37) in tRNA + 5'-deoxyadenosine + L-methionine + 2 oxidized [2Fe-2S]-[ferredoxin] + S-adenosyl-L-homocysteine. In terms of biological role, specifically methylates position 2 of adenine 2503 in 23S rRNA and position 2 of adenine 37 in tRNAs. The protein is Probable dual-specificity RNA methyltransferase RlmN 1 of Protochlamydia amoebophila (strain UWE25).